The following is a 218-amino-acid chain: Glycerol-3-phosphate acyltransferase 2 (218 aa).

The next 5 membrane-spanning stretches (helical) occupy residues 6–26, 50–70, 85–105, 115–135, and 159–179; these read YLLI…VLVG, VMGP…GTLA, LLLI…FLKF, AGVF…VFLP, and FWFH…LLFV.

The protein belongs to the PlsY family. In terms of assembly, probably interacts with PlsX.

It is found in the cell membrane. It carries out the reaction an acyl phosphate + sn-glycerol 3-phosphate = a 1-acyl-sn-glycero-3-phosphate + phosphate. It participates in lipid metabolism; phospholipid metabolism. Catalyzes the transfer of an acyl group from acyl-phosphate (acyl-PO(4)) to glycerol-3-phosphate (G3P) to form lysophosphatidic acid (LPA). This enzyme utilizes acyl-phosphate as fatty acyl donor, but not acyl-CoA or acyl-ACP. This chain is Glycerol-3-phosphate acyltransferase 2, found in Lactobacillus johnsonii (strain CNCM I-12250 / La1 / NCC 533).